The chain runs to 242 residues: DNA repair protein RecO (242 aa).

The protein belongs to the RecO family.

Involved in DNA repair and RecF pathway recombination. The protein is DNA repair protein RecO of Vibrio atlanticus (strain LGP32) (Vibrio splendidus (strain Mel32)).